The following is a 474-amino-acid chain: ATP synthase subunit beta (474 aa).

152–159 serves as a coordination point for ATP; sequence GGAGVGKT.

It belongs to the ATPase alpha/beta chains family. In terms of assembly, F-type ATPases have 2 components, CF(1) - the catalytic core - and CF(0) - the membrane proton channel. CF(1) has five subunits: alpha(3), beta(3), gamma(1), delta(1), epsilon(1). CF(0) has three main subunits: a(1), b(2) and c(9-12). The alpha and beta chains form an alternating ring which encloses part of the gamma chain. CF(1) is attached to CF(0) by a central stalk formed by the gamma and epsilon chains, while a peripheral stalk is formed by the delta and b chains.

It localises to the cell inner membrane. The catalysed reaction is ATP + H2O + 4 H(+)(in) = ADP + phosphate + 5 H(+)(out). Functionally, produces ATP from ADP in the presence of a proton gradient across the membrane. The catalytic sites are hosted primarily by the beta subunits. This is ATP synthase subunit beta from Magnetococcus marinus (strain ATCC BAA-1437 / JCM 17883 / MC-1).